A 224-amino-acid chain; its full sequence is tRNA (guanine-N(7)-)-methyltransferase (224 aa).

E54, E79, E106, and D129 together coordinate S-adenosyl-L-methionine. The active site involves D129. The substrate site is built by K133 and D165.

It belongs to the class I-like SAM-binding methyltransferase superfamily. TrmB family.

The enzyme catalyses guanosine(46) in tRNA + S-adenosyl-L-methionine = N(7)-methylguanosine(46) in tRNA + S-adenosyl-L-homocysteine. It participates in tRNA modification; N(7)-methylguanine-tRNA biosynthesis. Catalyzes the formation of N(7)-methylguanine at position 46 (m7G46) in tRNA. This chain is tRNA (guanine-N(7)-)-methyltransferase, found in Chlamydia abortus (strain DSM 27085 / S26/3) (Chlamydophila abortus).